The chain runs to 66 residues: COP-associated protein (66 aa).

In terms of domain architecture, HMA spans 1-66; sequence MKIDIPVKGM…AILDAGYELG (66 aa). Cu cation-binding residues include Cys-12 and Cys-15.

Its function is as follows. Part of a cation-transporting system which is associated with copper export out of the H.pylori cells. The chain is COP-associated protein (copP) from Helicobacter felis (strain ATCC 49179 / CCUG 28539 / NCTC 12436 / CS1).